The primary structure comprises 517 residues: Zinc finger protein 215 (517 aa).

The SCAN box domain maps to 48–126 (RQKFRHFQYL…EDMVTLIEDV (79 aa)). Residues 164–237 (VTFKDVVVEF…EKEIPRKTIF (74 aa)) form the KRAB domain. C2H2-type zinc fingers lie at residues 379–401 (YECYQCGKAFCRSSSLIRHQIIH), 407–429 (YKCSECGRFFNRRTNLTKHQKLH), 462–484 (YECVNCGKSFNRSSSLIRHQMIH), and 490–512 (FKCKECNKAFNRSSNLVKHQKLH).

The protein belongs to the krueppel C2H2-type zinc-finger protein family.

The protein resides in the nucleus. Its function is as follows. May be involved in transcriptional regulation. In Pongo abelii (Sumatran orangutan), this protein is Zinc finger protein 215 (ZNF215).